The chain runs to 445 residues: Tubulin beta-2B chain (445 aa).

Residues 1 to 4 (MREI) carry the MREI motif motif. Position 11 (Q11) interacts with GTP. At S40 the chain carries Phosphoserine. T55 carries the phosphothreonine modification. K58 is modified (N6-acetyllysine; alternate). K58 is modified (N6-succinyllysine; alternate). A Glycyl lysine isopeptide (Lys-Gly) (interchain with G-Cter in ubiquitin); alternate cross-link involves residue K58. GTP-binding residues include E69, S138, G142, T143, and G144. Mg(2+) is bound at residue E69. S172 is modified (phosphoserine; by CDK1). Residues N204 and N226 each coordinate GTP. T285 and T290 each carry phosphothreonine. R318 carries the omega-N-methylarginine modification. Residue K324 forms a Glycyl lysine isopeptide (Lys-Gly) (interchain with G-Cter in ubiquitin) linkage. The tract at residues 422 to 445 (YQQYQDATADEQGEFEEEEGEDEA) is disordered. Residues 429-445 (TADEQGEFEEEEGEDEA) show a composition bias toward acidic residues. 5-glutamyl polyglutamate is present on E438.

Belongs to the tubulin family. As to quaternary structure, dimer of alpha and beta chains. A typical microtubule is a hollow water-filled tube with an outer diameter of 25 nm and an inner diameter of 15 nM. Alpha-beta heterodimers associate head-to-tail to form protofilaments running lengthwise along the microtubule wall with the beta-tubulin subunit facing the microtubule plus end conferring a structural polarity. Microtubules usually have 13 protofilaments but different protofilament numbers can be found in some organisms and specialized cells. Mg(2+) serves as cofactor. Some glutamate residues at the C-terminus are polyglycylated, resulting in polyglycine chains on the gamma-carboxyl group. Glycylation is mainly limited to tubulin incorporated into axonemes (cilia and flagella) whereas glutamylation is prevalent in neuronal cells, centrioles, axonemes, and the mitotic spindle. Both modifications can coexist on the same protein on adjacent residues, and lowering polyglycylation levels increases polyglutamylation, and reciprocally. The precise function of polyglycylation is still unclear. Post-translationally, some glutamate residues at the C-terminus are polyglutamylated, resulting in polyglutamate chains on the gamma-carboxyl group. Polyglutamylation plays a key role in microtubule severing by spastin (SPAST). SPAST preferentially recognizes and acts on microtubules decorated with short polyglutamate tails: severing activity by SPAST increases as the number of glutamates per tubulin rises from one to eight, but decreases beyond this glutamylation threshold. In terms of processing, phosphorylated on Ser-172 by CDK1 during the cell cycle, from metaphase to telophase, but not in interphase. This phosphorylation inhibits tubulin incorporation into microtubules.

It localises to the cytoplasm. The protein resides in the cytoskeleton. In terms of biological role, tubulin is the major constituent of microtubules, a cylinder consisting of laterally associated linear protofilaments composed of alpha- and beta-tubulin heterodimers. Microtubules grow by the addition of GTP-tubulin dimers to the microtubule end, where a stabilizing cap forms. Below the cap, tubulin dimers are in GDP-bound state, owing to GTPase activity of alpha-tubulin. Implicated in neuronal migration. This chain is Tubulin beta-2B chain (TUBB2B), found in Bos taurus (Bovine).